The sequence spans 561 residues: Lysine--tRNA ligase (561 aa).

2 residues coordinate Mg(2+): Glu-409 and Glu-416.

Belongs to the class-II aminoacyl-tRNA synthetase family. As to quaternary structure, homodimer. Requires Mg(2+) as cofactor.

The protein resides in the cytoplasm. It carries out the reaction tRNA(Lys) + L-lysine + ATP = L-lysyl-tRNA(Lys) + AMP + diphosphate. In Trichormus variabilis (strain ATCC 29413 / PCC 7937) (Anabaena variabilis), this protein is Lysine--tRNA ligase.